The following is an 84-amino-acid chain: U21-theraphotoxin-Cg1a 3 (84 aa).

The signal sequence occupies residues 1–21 (MKVSVLITLAVLGVMFLLTSA). The propeptide occupies 22–47 (EERGSDQMDSPAWLKSMERIFQSEER). Intrachain disulfides connect C49/C63, C56/C68, and C62/C76. V82 carries the valine amide modification.

Belongs to the neurotoxin 10 (Hwtx-1) family. 05 (F4a) subfamily. As to expression, expressed by the venom gland.

The protein resides in the secreted. Its function is as follows. Probable ion channel inhibitor. The sequence is that of U21-theraphotoxin-Cg1a 3 from Chilobrachys guangxiensis (Chinese earth tiger tarantula).